Here is a 342-residue protein sequence, read N- to C-terminus: S-adenosylmethionine:tRNA ribosyltransferase-isomerase (342 aa).

The protein belongs to the QueA family. Monomer.

The protein localises to the cytoplasm. It carries out the reaction 7-aminomethyl-7-carbaguanosine(34) in tRNA + S-adenosyl-L-methionine = epoxyqueuosine(34) in tRNA + adenine + L-methionine + 2 H(+). It participates in tRNA modification; tRNA-queuosine biosynthesis. Transfers and isomerizes the ribose moiety from AdoMet to the 7-aminomethyl group of 7-deazaguanine (preQ1-tRNA) to give epoxyqueuosine (oQ-tRNA). This Zymomonas mobilis subsp. mobilis (strain ATCC 31821 / ZM4 / CP4) protein is S-adenosylmethionine:tRNA ribosyltransferase-isomerase.